We begin with the raw amino-acid sequence, 474 residues long: PTS system MurNAc-GlcNAc-specific EIIBC component (474 aa).

In terms of domain architecture, PTS EIIB type-1 spans 5–87; sequence ERLAKDITHA…ADQSGATLAE (83 aa). The active-site Phosphocysteine intermediate; for EIIB activity is Cys-27. The region spanning 124–474 is the PTS EIIC type-1 domain; that stretch reads KSIANIFIPL…GTTKEMRNPE (351 aa). 10 helical membrane-spanning segments follow: residues 129 to 149, 167 to 187, 193 to 213, 228 to 248, 268 to 288, 299 to 319, 343 to 363, 378 to 398, 402 to 422, and 444 to 464; these read IFIP…IAAI, IVTV…IFTG, VFGA…LTGI, LAAG…LSMV, ITLL…AGFV, IIGV…LPLV, LLPI…ALWV, ALPV…TLPL, FFTA…IGHI, and LGYI…TYFF.

Its subcellular location is the cell membrane. The enzyme catalyses N-acetyl-beta-D-muramate-(1-&gt;4)-N-acetyl-D-glucosamine(out) + N(pros)-phospho-L-histidyl-[protein] = 6-phospho-N-acetyl-beta-D-muramate-(1-&gt;4)-N-acetyl-D-glucosamine(in) + L-histidyl-[protein]. It functions in the pathway cell wall biogenesis; peptidoglycan recycling. The phosphoenolpyruvate-dependent sugar phosphotransferase system (sugar PTS), a major carbohydrate active transport system, catalyzes the phosphorylation of incoming sugar substrates concomitantly with their translocation across the cell membrane. This system is involved in the uptake and phosphorylation of MurNAc-GlcNAc, the principle peptidoglycan turnover product of S.aureus, yielding cytoplasmic MurNAc 6P-GlcNAc. The polypeptide is PTS system MurNAc-GlcNAc-specific EIIBC component (Staphylococcus epidermidis (strain ATCC 35984 / DSM 28319 / BCRC 17069 / CCUG 31568 / BM 3577 / RP62A)).